Reading from the N-terminus, the 488-residue chain is Inosine-5'-monophosphate dehydrogenase (488 aa).

CBS domains are found at residues 95-153 (VISN…SIKI) and 157-216 (MTQE…AKDE). NAD(+)-binding positions include Asp-250 and 300–302 (GIG). K(+) contacts are provided by Gly-302 and Gly-304. Ser-305 lines the IMP pocket. Cys-307 is a binding site for K(+). Cys-307 (thioimidate intermediate) is an active-site residue. Residues 340–342 (DGG), 363–364 (GS), and 387–391 (YRGMG) contribute to the IMP site. Arg-403 (proton acceptor) is an active-site residue. Glu-417 lines the IMP pocket. The segment at 468–488 (GLAESHPHNIQITKESPNYSF) is disordered. Glu-471, Ser-472, and His-473 together coordinate K(+). A compositionally biased stretch (polar residues) spans 475-488 (HNIQITKESPNYSF).

Belongs to the IMPDH/GMPR family. Homotetramer. K(+) serves as cofactor.

The enzyme catalyses IMP + NAD(+) + H2O = XMP + NADH + H(+). The protein operates within purine metabolism; XMP biosynthesis via de novo pathway; XMP from IMP: step 1/1. Mycophenolic acid (MPA) is a non-competitive inhibitor that prevents formation of the closed enzyme conformation by binding to the same site as the amobile flap. In contrast, mizoribine monophosphate (MZP) is a competitive inhibitor that induces the closed conformation. MPA is a potent inhibitor of mammalian IMPDHs but a poor inhibitor of the bacterial enzymes. MZP is a more potent inhibitor of bacterial IMPDH. In terms of biological role, catalyzes the conversion of inosine 5'-phosphate (IMP) to xanthosine 5'-phosphate (XMP), the first committed and rate-limiting step in the de novo synthesis of guanine nucleotides, and therefore plays an important role in the regulation of cell growth. This chain is Inosine-5'-monophosphate dehydrogenase, found in Staphylococcus aureus (strain Mu50 / ATCC 700699).